The following is a 280-amino-acid chain: Chaperone protein LppX (280 aa).

The signal sequence occupies residues 1 to 18; sequence MRKWLIFLLIAAVAGLSA. The N-palmitoyl cysteine moiety is linked to residue Cys19. A lipid anchor (S-diacylglycerol cysteine) is attached at Cys19.

It localises to the cell membrane. Its function is as follows. Is required for the expression of the adjacently encoded xylanase Xyn11E in an active form. LppX seems to act as a specific chaperone necessary for the correct folding of the xylanase during secretion across the cytoplasmic membrane. The chain is Chaperone protein LppX from Paenibacillus barcinonensis.